A 1078-amino-acid chain; its full sequence is Carbamoyl phosphate synthase large chain (1078 aa).

The tract at residues M1 to E401 is carboxyphosphate synthetic domain. ATP is bound by residues R129, R169, G175, G176, R208, L210, E215, G241, V242, H243, Q284, and E298. The ATP-grasp 1 domain occupies K133–I327. 3 residues coordinate Mg(2+): Q284, E298, and N300. Positions 284, 298, and 300 each coordinate Mn(2+). The segment at T402–A546 is oligomerization domain. A carbamoyl phosphate synthetic domain region spans residues P547–G935. Residues E677 to L867 enclose the ATP-grasp 2 domain. ATP-binding residues include R713, K752, L754, E758, G783, V784, H785, S786, Q826, and E838. 3 residues coordinate Mg(2+): Q826, E838, and N840. Mn(2+) is bound by residues Q826, E838, and N840. The region spanning L936–A1078 is the MGS-like domain. The interval L936–A1078 is allosteric domain.

The protein belongs to the CarB family. As to quaternary structure, composed of two chains; the small (or glutamine) chain promotes the hydrolysis of glutamine to ammonia, which is used by the large (or ammonia) chain to synthesize carbamoyl phosphate. Tetramer of heterodimers (alpha,beta)4. Mg(2+) is required as a cofactor. Requires Mn(2+) as cofactor.

It carries out the reaction hydrogencarbonate + L-glutamine + 2 ATP + H2O = carbamoyl phosphate + L-glutamate + 2 ADP + phosphate + 2 H(+). It catalyses the reaction hydrogencarbonate + NH4(+) + 2 ATP = carbamoyl phosphate + 2 ADP + phosphate + 2 H(+). It functions in the pathway amino-acid biosynthesis; L-arginine biosynthesis; carbamoyl phosphate from bicarbonate: step 1/1. Its pathway is pyrimidine metabolism; UMP biosynthesis via de novo pathway; (S)-dihydroorotate from bicarbonate: step 1/3. Functionally, large subunit of the glutamine-dependent carbamoyl phosphate synthetase (CPSase). CPSase catalyzes the formation of carbamoyl phosphate from the ammonia moiety of glutamine, carbonate, and phosphate donated by ATP, constituting the first step of 2 biosynthetic pathways, one leading to arginine and/or urea and the other to pyrimidine nucleotides. The large subunit (synthetase) binds the substrates ammonia (free or transferred from glutamine from the small subunit), hydrogencarbonate and ATP and carries out an ATP-coupled ligase reaction, activating hydrogencarbonate by forming carboxy phosphate which reacts with ammonia to form carbamoyl phosphate. This is Carbamoyl phosphate synthase large chain from Thermomicrobium roseum (strain ATCC 27502 / DSM 5159 / P-2).